Consider the following 218-residue polypeptide: Glutathione S-transferase Mu 1 (218 aa).

In terms of domain architecture, GST N-terminal spans 2–88 (PMILGYWDIR…YIARKHNLCG (87 aa)). 7-8 (YW) is a binding site for glutathione. Thr34 carries the post-translational modification Phosphothreonine. Glutathione-binding positions include 43 to 46 (RSQW), Lys50, 59 to 60 (NL), and 72 to 73 (QS). The GST C-terminal domain occupies 90 to 208 (TEEEKIRVDI…KSSRFLPRPV (119 aa)). Tyr116 serves as a coordination point for substrate. A Phosphoserine modification is found at Ser210.

It belongs to the GST superfamily. Mu family. In terms of assembly, homodimer. Liver (at protein level).

The protein resides in the cytoplasm. It carries out the reaction RX + glutathione = an S-substituted glutathione + a halide anion + H(+). The enzyme catalyses prostaglandin A2 + glutathione = prostaglandin A2-S-(R)-glutathione. It catalyses the reaction prostaglandin J2 + glutathione = prostaglandin J2-S-(R)-glutathione. The catalysed reaction is prostaglandin J2 + glutathione = prostaglandin J2-S-(S)-glutathione. It carries out the reaction prostaglandin A2 + glutathione = prostaglandin A2-S-(S)-glutathione. The enzyme catalyses 11(S)-hydroxy-14(S),15(S)-epoxy-(5Z,8Z,12E)-eicosatrienoate + glutathione = (11S,15S)-dihydroxy-14(R)-S-glutathionyl-(5Z,8Z,12E)-eicosatrienoate. Functionally, conjugation of reduced glutathione to a wide number of exogenous and endogenous hydrophobic electrophiles. Involved in the formation of glutathione conjugates of both prostaglandin A2 (PGA2) and prostaglandin J2 (PGJ2). Participates in the formation of novel hepoxilin regioisomers. This Homo sapiens (Human) protein is Glutathione S-transferase Mu 1.